An 871-amino-acid polypeptide reads, in one-letter code: Alanine--tRNA ligase (871 aa).

Residues His563, His567, Cys665, and His669 each contribute to the Zn(2+) site.

The protein belongs to the class-II aminoacyl-tRNA synthetase family. Zn(2+) is required as a cofactor.

Its subcellular location is the cytoplasm. The enzyme catalyses tRNA(Ala) + L-alanine + ATP = L-alanyl-tRNA(Ala) + AMP + diphosphate. Its function is as follows. Catalyzes the attachment of alanine to tRNA(Ala) in a two-step reaction: alanine is first activated by ATP to form Ala-AMP and then transferred to the acceptor end of tRNA(Ala). Also edits incorrectly charged Ser-tRNA(Ala) and Gly-tRNA(Ala) via its editing domain. The protein is Alanine--tRNA ligase of Christiangramia forsetii (strain DSM 17595 / CGMCC 1.15422 / KT0803) (Gramella forsetii).